Reading from the N-terminus, the 803-residue chain is Phosphoribosylformylglycinamidine synthase subunit PurL (803 aa).

His-65 is a catalytic residue. Tyr-68 and Lys-107 together coordinate ATP. Glu-109 contacts Mg(2+). Substrate-binding positions include 110 to 113 (SHNH) and Arg-132. The Proton acceptor role is filled by His-111. Asp-133 is a Mg(2+) binding site. Gln-256 provides a ligand contact to substrate. Asp-284 lines the Mg(2+) pocket. 328–330 (ESQ) contacts substrate. ATP is bound by residues Asn-537 and Gly-574. Asn-575 lines the Mg(2+) pocket. Ser-577 is a binding site for substrate.

It belongs to the FGAMS family. As to quaternary structure, monomer. Part of the FGAM synthase complex composed of 1 PurL, 1 PurQ and 2 PurS subunits.

It is found in the cytoplasm. The enzyme catalyses N(2)-formyl-N(1)-(5-phospho-beta-D-ribosyl)glycinamide + L-glutamine + ATP + H2O = 2-formamido-N(1)-(5-O-phospho-beta-D-ribosyl)acetamidine + L-glutamate + ADP + phosphate + H(+). Its pathway is purine metabolism; IMP biosynthesis via de novo pathway; 5-amino-1-(5-phospho-D-ribosyl)imidazole from N(2)-formyl-N(1)-(5-phospho-D-ribosyl)glycinamide: step 1/2. In terms of biological role, part of the phosphoribosylformylglycinamidine synthase complex involved in the purines biosynthetic pathway. Catalyzes the ATP-dependent conversion of formylglycinamide ribonucleotide (FGAR) and glutamine to yield formylglycinamidine ribonucleotide (FGAM) and glutamate. The FGAM synthase complex is composed of three subunits. PurQ produces an ammonia molecule by converting glutamine to glutamate. PurL transfers the ammonia molecule to FGAR to form FGAM in an ATP-dependent manner. PurS interacts with PurQ and PurL and is thought to assist in the transfer of the ammonia molecule from PurQ to PurL. In Prochlorococcus marinus (strain NATL1A), this protein is Phosphoribosylformylglycinamidine synthase subunit PurL.